The sequence spans 861 residues: DNA mismatch repair protein MutS (861 aa).

616–623 is an ATP binding site; it reads GPNMGGKS.

Belongs to the DNA mismatch repair MutS family.

This protein is involved in the repair of mismatches in DNA. It is possible that it carries out the mismatch recognition step. This protein has a weak ATPase activity. In Haemophilus influenzae (strain 86-028NP), this protein is DNA mismatch repair protein MutS.